A 367-amino-acid polypeptide reads, in one-letter code: Peptide chain release factor 2 (367 aa).

Residue Gln-250 is modified to N5-methylglutamine.

The protein belongs to the prokaryotic/mitochondrial release factor family. Methylated by PrmC. Methylation increases the termination efficiency of RF2.

The protein localises to the cytoplasm. Its function is as follows. Peptide chain release factor 2 directs the termination of translation in response to the peptide chain termination codons UGA and UAA. The chain is Peptide chain release factor 2 from Chloroflexus aggregans (strain MD-66 / DSM 9485).